A 334-amino-acid polypeptide reads, in one-letter code: Holliday junction branch migration complex subunit RuvB (334 aa).

The tract at residues 4-184 is large ATPase domain (RuvB-L); that stretch reads ADRIISASPK…FGIVQRLEFY (181 aa). ATP-binding positions include I23, R24, G65, K68, T69, T70, 131–133, R174, Y184, and R221; that span reads EDY. Residue T69 coordinates Mg(2+). Positions 185–255 are small ATPAse domain (RuvB-S); the sequence is SVDDLTSIVK…IAKQALAMLD (71 aa). The interval 258–334 is head domain (RuvB-H); it reads SEGFDFMDIK…YAHLGIAKLD (77 aa). Positions 294, 313, and 318 each coordinate DNA.

Belongs to the RuvB family. In terms of assembly, homohexamer. Forms an RuvA(8)-RuvB(12)-Holliday junction (HJ) complex. HJ DNA is sandwiched between 2 RuvA tetramers; dsDNA enters through RuvA and exits via RuvB. An RuvB hexamer assembles on each DNA strand where it exits the tetramer. Each RuvB hexamer is contacted by two RuvA subunits (via domain III) on 2 adjacent RuvB subunits; this complex drives branch migration. In the full resolvosome a probable DNA-RuvA(4)-RuvB(12)-RuvC(2) complex forms which resolves the HJ.

The protein resides in the cytoplasm. It carries out the reaction ATP + H2O = ADP + phosphate + H(+). In terms of biological role, the RuvA-RuvB-RuvC complex processes Holliday junction (HJ) DNA during genetic recombination and DNA repair, while the RuvA-RuvB complex plays an important role in the rescue of blocked DNA replication forks via replication fork reversal (RFR). RuvA specifically binds to HJ cruciform DNA, conferring on it an open structure. The RuvB hexamer acts as an ATP-dependent pump, pulling dsDNA into and through the RuvAB complex. RuvB forms 2 homohexamers on either side of HJ DNA bound by 1 or 2 RuvA tetramers; 4 subunits per hexamer contact DNA at a time. Coordinated motions by a converter formed by DNA-disengaged RuvB subunits stimulates ATP hydrolysis and nucleotide exchange. Immobilization of the converter enables RuvB to convert the ATP-contained energy into a lever motion, pulling 2 nucleotides of DNA out of the RuvA tetramer per ATP hydrolyzed, thus driving DNA branch migration. The RuvB motors rotate together with the DNA substrate, which together with the progressing nucleotide cycle form the mechanistic basis for DNA recombination by continuous HJ branch migration. Branch migration allows RuvC to scan DNA until it finds its consensus sequence, where it cleaves and resolves cruciform DNA. This chain is Holliday junction branch migration complex subunit RuvB, found in Actinobacillus pleuropneumoniae serotype 5b (strain L20).